The following is a 215-amino-acid chain: Cytochrome b6 (215 aa).

A helical transmembrane segment spans residues 32–52 (IFYCLGGITLTCFLVQVATGF). Cysteine 35 serves as a coordination point for heme c. 2 residues coordinate heme b: histidine 86 and histidine 100. The next 3 helical transmembrane spans lie at 90–110 (ASMM…TGGF), 116–136 (LTWV…VTGY), and 186–206 (LHTF…FSMI). Histidine 187 and histidine 202 together coordinate heme b.

It belongs to the cytochrome b family. PetB subfamily. In terms of assembly, the 4 large subunits of the cytochrome b6-f complex are cytochrome b6, subunit IV (17 kDa polypeptide, PetD), cytochrome f and the Rieske protein, while the 4 small subunits are PetG, PetL, PetM and PetN. The complex functions as a dimer. The cofactor is heme b. Requires heme c as cofactor.

The protein localises to the plastid. It localises to the chloroplast thylakoid membrane. Its function is as follows. Component of the cytochrome b6-f complex, which mediates electron transfer between photosystem II (PSII) and photosystem I (PSI), cyclic electron flow around PSI, and state transitions. This is Cytochrome b6 from Piper cenocladum (Ant piper).